Here is a 249-residue protein sequence, read N- to C-terminus: Exosome complex component Rrp41 (249 aa).

Belongs to the RNase PH family. Rrp41 subfamily. In terms of assembly, component of the archaeal exosome complex. Forms a hexameric ring-like arrangement composed of 3 Rrp41-Rrp42 heterodimers. The hexameric ring associates with a trimer of Rrp4 and/or Csl4 subunits.

It is found in the cytoplasm. In terms of biological role, catalytic component of the exosome, which is a complex involved in RNA degradation. Has 3'-&gt;5' exoribonuclease activity. Can also synthesize heteromeric RNA-tails. This is Exosome complex component Rrp41 from Thermococcus kodakarensis (strain ATCC BAA-918 / JCM 12380 / KOD1) (Pyrococcus kodakaraensis (strain KOD1)).